We begin with the raw amino-acid sequence, 285 residues long: 2-dehydro-3-deoxyphosphooctonate aldolase (285 aa).

Belongs to the KdsA family.

The protein localises to the cytoplasm. It carries out the reaction D-arabinose 5-phosphate + phosphoenolpyruvate + H2O = 3-deoxy-alpha-D-manno-2-octulosonate-8-phosphate + phosphate. The protein operates within carbohydrate biosynthesis; 3-deoxy-D-manno-octulosonate biosynthesis; 3-deoxy-D-manno-octulosonate from D-ribulose 5-phosphate: step 2/3. It functions in the pathway bacterial outer membrane biogenesis; lipopolysaccharide biosynthesis. This is 2-dehydro-3-deoxyphosphooctonate aldolase from Bordetella bronchiseptica (strain ATCC BAA-588 / NCTC 13252 / RB50) (Alcaligenes bronchisepticus).